The following is a 382-amino-acid chain: uncharacterized protein (382 aa).

The next 11 membrane-spanning stretches (helical) occupy residues valine 8 to leucine 28, methionine 45 to isoleucine 65, tyrosine 75 to tryptophan 95, phenylalanine 102 to serine 122, leucine 131 to serine 151, leucine 157 to phenylalanine 177, leucine 204 to proline 224, glycine 231 to glycine 251, valine 274 to isoleucine 294, alanine 325 to methionine 345, and serine 349 to leucine 369.

The protein belongs to the major facilitator superfamily. YcaD (TC 2.A.1.26) family.

The protein resides in the cell inner membrane. This is an uncharacterized protein from Salmonella gallinarum (strain 287/91 / NCTC 13346).